Reading from the N-terminus, the 83-residue chain is MNKNTQDKGTPAALQVFLLPQYNRYSAEMTRHVPLLCNLFSMSRYVLRHLTAQIILERMSAACVCLRRRRQSEFTDPTEKIGE.

This is an uncharacterized protein from Treponema pallidum (strain Nichols).